The chain runs to 359 residues: Trans-enoyl reductase FSL5 (359 aa).

47–50 contributes to the NADP(+) binding site; that stretch reads IDGK. 134–141 is a binding site for substrate; sequence SGVGTIGL. Residues 169 to 172, 192 to 195, Tyr210, and 257 to 258 contribute to the NADP(+) site; these read STAT, SPHN, and LE. 277-281 provides a ligand contact to substrate; sequence GPTLL. 346-347 serves as a coordination point for NADP(+); that stretch reads VS.

This sequence belongs to the zinc-containing alcohol dehydrogenase family. In terms of assembly, monomer.

It functions in the pathway secondary metabolite biosynthesis. In terms of biological role, trans-enoyl reductase; part of the gene cluster that mediates the biosynthesis of fusarielins F, G and H, decaketide compounds with 5 methylations and a decaline core that act as mycoestrogens as they stimulate growth of MCF-7 breast cancer cells. The initial compound in the pathway is produced by the reducing polyketide synthase FSL1. FSL1 lacks an active enoyl reductase (ER) domain and biosynthesis of fusarielins relies on the trans-acting enoyl reductase FSL5, before it is released through hydrolysis catalyzed by the thioesterase FSL2. Fusarielins F, G, and H have a C11=C12 cis double bond and is fully reduced between C10 and C11 and between C12 and C13. FSL3 can be involved in the formation of the C11=C12 cis double bond by moving a hypothetical C10=C11 or C12=C13 trans double bond to form prefusarielin. Prefusarielin is oxygenated at C15 and C16 by the cytochrome P450 monooxygenase FSL4, resulting in fusarielin F, which subsequently is epoxidized into fusarielin G by the same enzyme. The final step in the pathway is a reduction of the carboxylic acid moiety to yield fusarielin H via a still undetermined mechanism. This is Trans-enoyl reductase FSL5 from Gibberella zeae (strain ATCC MYA-4620 / CBS 123657 / FGSC 9075 / NRRL 31084 / PH-1) (Wheat head blight fungus).